The chain runs to 101 residues: NADH-quinone oxidoreductase subunit K (101 aa).

3 helical membrane-spanning segments follow: residues 4-24, 30-50, and 61-81; these read LSHY…GIFL, IVLL…FIAF, and VFVF…LAIL.

Belongs to the complex I subunit 4L family. NDH-1 is composed of 14 different subunits. Subunits NuoA, H, J, K, L, M, N constitute the membrane sector of the complex.

Its subcellular location is the cell inner membrane. It carries out the reaction a quinone + NADH + 5 H(+)(in) = a quinol + NAD(+) + 4 H(+)(out). Its function is as follows. NDH-1 shuttles electrons from NADH, via FMN and iron-sulfur (Fe-S) centers, to quinones in the respiratory chain. The immediate electron acceptor for the enzyme in this species is believed to be ubiquinone. Couples the redox reaction to proton translocation (for every two electrons transferred, four hydrogen ions are translocated across the cytoplasmic membrane), and thus conserves the redox energy in a proton gradient. The chain is NADH-quinone oxidoreductase subunit K from Methylovorus glucosotrophus (strain SIP3-4).